The primary structure comprises 448 residues: Adenylosuccinate synthetase (448 aa).

GTP contacts are provided by residues glycine 22–lysine 28 and glycine 50–threonine 52. Aspartate 23 functions as the Proton acceptor in the catalytic mechanism. The Mg(2+) site is built by aspartate 23 and glycine 50. IMP contacts are provided by residues aspartate 23 to lysine 26, asparagine 48 to histidine 51, threonine 139, arginine 153, glutamine 234, threonine 249, and arginine 321. Residue histidine 51 is the Proton donor of the active site. A substrate-binding site is contributed by serine 317–arginine 323. GTP is bound by residues arginine 323, lysine 349–aspartate 351, and serine 431–glycine 433.

The protein belongs to the adenylosuccinate synthetase family. In terms of assembly, homodimer. The cofactor is Mg(2+).

Its subcellular location is the cytoplasm. It catalyses the reaction IMP + L-aspartate + GTP = N(6)-(1,2-dicarboxyethyl)-AMP + GDP + phosphate + 2 H(+). It functions in the pathway purine metabolism; AMP biosynthesis via de novo pathway; AMP from IMP: step 1/2. Its function is as follows. Plays an important role in the de novo pathway of purine nucleotide biosynthesis. Catalyzes the first committed step in the biosynthesis of AMP from IMP. This is Adenylosuccinate synthetase from Paraburkholderia phytofirmans (strain DSM 17436 / LMG 22146 / PsJN) (Burkholderia phytofirmans).